The chain runs to 425 residues: Sucrose-phosphatase 2 (425 aa).

Belongs to the sucrose phosphatase family. As to quaternary structure, homodimer. The cofactor is Mg(2+).

It catalyses the reaction sucrose 6(F)-phosphate + H2O = sucrose + phosphate. It functions in the pathway glycan biosynthesis; sucrose biosynthesis; sucrose from D-fructose 6-phosphate and UDP-alpha-D-glucose: step 2/2. With respect to regulation, inhibited by EDTA. In terms of biological role, catalyzes the final step of sucrose synthesis. This chain is Sucrose-phosphatase 2 (SPP2), found in Nicotiana tabacum (Common tobacco).